The sequence spans 236 residues: Lipid A 4'-phosphatase (236 aa).

A run of 5 helical transmembrane segments spans residues 26-46 (FFYL…FLFF), 58-78 (FIVG…SSFF), 134-153 (YTWT…IYIG), 160-182 (IIPG…LYAR), and 200-220 (GDSI…MLCM).

It belongs to the lipid A LpxF 4'-phosphatase family.

The protein localises to the cell inner membrane. It participates in bacterial outer membrane biogenesis; LPS lipid A biosynthesis. In terms of biological role, removes the 4'-phosphate group from lipid A species. Absence of phosphate groups in lipid A renders the bacteria resistant to host-derived cationic antimicrobial peptides (CAMP) and allows it to camouflage itself from the host innate immune response. Removal of the 4'-phosphate may be required to generate the substrate for deacylation of the pentaacyl lipid A to the tetraccylated lipid A species. This chain is Lipid A 4'-phosphatase, found in Porphyromonas gingivalis (strain ATCC 33277 / DSM 20709 / CIP 103683 / JCM 12257 / NCTC 11834 / 2561).